The sequence spans 218 residues: Small ribosomal subunit protein uS5 (218 aa).

In terms of domain architecture, S5 DRBM spans 66–129; it reads LKQELLNVNL…REAKLNLVPV (64 aa).

This sequence belongs to the universal ribosomal protein uS5 family. Part of the 30S ribosomal subunit. Contacts protein S4.

In terms of biological role, with S4 and S12 plays an important role in translational accuracy. This Pyrobaculum aerophilum (strain ATCC 51768 / DSM 7523 / JCM 9630 / CIP 104966 / NBRC 100827 / IM2) protein is Small ribosomal subunit protein uS5.